The following is a 111-amino-acid chain: Protein IDA-LIKE 5 (111 aa).

The first 27 residues, 1-27 (MGNKRIKAMMILVVMIMMVFSWRICEA), serve as a signal peptide directing secretion. Basic residues predominate over residues 46–56 (RRPNPRNHHHQ). The interval 46-65 (RRPNPRNHHHQNQGFNGDDY) is disordered.

Expressed mainly in flowers. Lower levels in buds and seedlings. Detected in vascular tissues and in hydathodes.

The protein localises to the secreted. It is found in the extracellular space. Functionally, may be involved in floral abscission. The chain is Protein IDA-LIKE 5 (IDL5) from Arabidopsis thaliana (Mouse-ear cress).